A 130-amino-acid polypeptide reads, in one-letter code: Protachykinin-1 (130 aa).

A signal peptide spans 1-19; that stretch reads MKILVAVAVIFFISTQLSA. A propeptide spanning residues 20 to 56 is cleaved from the precursor; the sequence is EEIGANDDFNYWSDWSDSDQIKEEMPEPFEHLLQRIA. A methionine amide mark is found at M68 and M107.

It belongs to the tachykinin family. The substance P form is cleaved at Pro-59 by the prolyl endopeptidase FAP (seprase) activity (in vitro). Substance P is also cleaved and degraded by Angiotensin-converting enzyme (ACE) and neprilysin (MME).

It localises to the secreted. Functionally, tachykinins are active peptides which excite neurons, evoke behavioral responses, are potent vasodilators and secretagogues, and contract (directly or indirectly) many smooth muscles. In Bos taurus (Bovine), this protein is Protachykinin-1 (TAC1).